The sequence spans 426 residues: 6-Hydroxy-7-prenyldeoxybrevianamide E synthase notC' (426 aa).

Residue Glu-94 participates in substrate binding. Arg-105, Lys-191, and Tyr-193 together coordinate dimethylallyl diphosphate. Position 195 (Tyr-195) interacts with substrate. Dimethylallyl diphosphate contacts are provided by Lys-267, Tyr-269, Gln-352, Tyr-354, Tyr-418, and Tyr-422.

Belongs to the tryptophan dimethylallyltransferase family.

The catalysed reaction is 6-hydroxydeoxybrevianamide E + dimethylallyl diphosphate = notoamide S + diphosphate. It participates in alkaloid biosynthesis. Prenyltransferase; part of the gene cluster that mediates the biosynthesis of notoamide, a fungal indole alkaloid that belongs to a family of natural products containing a characteristic bicyclo[2.2.2]diazaoctane core. The first step of notoamide biosynthesis involves coupling of L-proline and L-tryptophan by the bimodular NRPS notE', to produce cyclo-L-tryptophan-L-proline called brevianamide F. The reverse prenyltransferase notF' then acts as a deoxybrevianamide E synthase and converts brevianamide F to deoxybrevianamide E via reverse prenylation at C-2 of the indole ring leading to the bicyclo[2.2.2]diazaoctane core. Deoxybrevianamide E is further hydroxylated at C-6 of the indole ring, likely catalyzed by the cytochrome P450 monooxygenase notG', to yield 6-hydroxy-deoxybrevianamide E. 6-hydroxy-deoxybrevianamide E is a specific substrate of the prenyltransferase notC' for normal prenylation at C-7 to produce 6-hydroxy-7-prenyl-deoxybrevianamide, also called notoamide S. As the proposed pivotal branching point in notoamide biosynthesis, notoamide S can be diverted to notoamide E through an oxidative pyran ring closure putatively catalyzed by either notH' cytochrome P450 monooxygenase or the notD' FAD-linked oxidoreductase. This step would be followed by an indole 2,3-epoxidation-initiated pinacol-like rearrangement catalyzed by the notB' FAD-dependent monooxygenase leading to the formation of notoamide C and notoamide D. On the other hand notoamide S is converted to notoamide T by notH' (or notD'), a bifunctional oxidase that also functions as the intramolecular Diels-Alderase responsible for generation of (-)-notoamide T. To generate antipodal (+)-notoaminide T, notH (or notD) in Aspergillus strain MF297-2 is expected to catalyze a Diels-Alder reaction leading to the opposite stereochemistry. The remaining oxidoreductase notD' (or notH') likely catalyzes the oxidative pyran ring formation to yield (-)-stephacidin A. The FAD-dependent monooxygenase notI' is highly similar to notB' and is predicted to catalyze a similar conversion from (-)-stephacidin A to (+)-notoamide B via the 2,3-epoxidation of (-)-stephacidin A followed by a pinacol-type rearrangement. Finally, it remains unclear which enzyme could be responsible for the final hydroxylation steps leading to notoamide A and sclerotiamide. This chain is 6-Hydroxy-7-prenyldeoxybrevianamide E synthase notC', found in Aspergillus versicolor.